We begin with the raw amino-acid sequence, 257 residues long: NAD-capped RNA hydrolase NudC (257 aa).

Residues lysine 27 and arginine 71 each contribute to the substrate site. Residues cysteine 100 and cysteine 103 each contribute to the Zn(2+) site. Glutamate 113 serves as a coordination point for substrate. 2 residues coordinate Zn(2+): cysteine 118 and cysteine 121. Tyrosine 126 lines the substrate pocket. In terms of domain architecture, Nudix hydrolase spans 127–251; it reads PQIAPCIIVG…IARRLIEDTI (125 aa). Residues alanine 160, glutamate 176, and glutamate 180 each coordinate a divalent metal cation. The short motif at 161–182 is the Nudix box element; the sequence is GFVEVGETLEEAVVREVMEESN. 194 to 201 provides a ligand contact to substrate; the sequence is QPWPFPHS. Glutamate 221 is an a divalent metal cation binding site. Alanine 243 contacts substrate.

This sequence belongs to the Nudix hydrolase family. NudC subfamily. Homodimer. The cofactor is Mg(2+). Requires Mn(2+) as cofactor. It depends on Zn(2+) as a cofactor.

It carries out the reaction a 5'-end NAD(+)-phospho-ribonucleoside in mRNA + H2O = a 5'-end phospho-adenosine-phospho-ribonucleoside in mRNA + beta-nicotinamide D-ribonucleotide + 2 H(+). The enzyme catalyses NAD(+) + H2O = beta-nicotinamide D-ribonucleotide + AMP + 2 H(+). The catalysed reaction is NADH + H2O = reduced beta-nicotinamide D-ribonucleotide + AMP + 2 H(+). Functionally, mRNA decapping enzyme that specifically removes the nicotinamide adenine dinucleotide (NAD) cap from a subset of mRNAs by hydrolyzing the diphosphate linkage to produce nicotinamide mononucleotide (NMN) and 5' monophosphate mRNA. The NAD-cap is present at the 5'-end of some mRNAs and stabilizes RNA against 5'-processing. Has preference for mRNAs with a 5'-end purine. Catalyzes the hydrolysis of a broad range of dinucleotide pyrophosphates. In Photorhabdus laumondii subsp. laumondii (strain DSM 15139 / CIP 105565 / TT01) (Photorhabdus luminescens subsp. laumondii), this protein is NAD-capped RNA hydrolase NudC.